The chain runs to 140 residues: Endoribonuclease YbeY (140 aa).

Zn(2+)-binding residues include histidine 100, histidine 104, and histidine 110.

This sequence belongs to the endoribonuclease YbeY family. Zn(2+) serves as cofactor.

It localises to the cytoplasm. Single strand-specific metallo-endoribonuclease involved in late-stage 70S ribosome quality control and in maturation of the 3' terminus of the 16S rRNA. The chain is Endoribonuclease YbeY from Helicobacter pylori (strain ATCC 700392 / 26695) (Campylobacter pylori).